The sequence spans 135 residues: Glutaredoxin-C5 (135 aa).

Positions 29–134 (AERVERLASE…PLLKEAGALW (106 aa)) constitute a Glutaredoxin domain. Residues cysteine 49 and cysteine 52 are joined by a disulfide bond. Residues 132 to 135 (ALWL) carry the Responsive for interaction with TGA factors motif.

It belongs to the glutaredoxin family. CC-type subfamily.

It localises to the cytoplasm. Its subcellular location is the nucleus. Its function is as follows. Has a glutathione-disulfide oxidoreductase activity in the presence of NADPH and glutathione reductase. Reduces low molecular weight disulfides and proteins. This is Glutaredoxin-C5 (GRXC5) from Oryza sativa subsp. japonica (Rice).